Reading from the N-terminus, the 195-residue chain is Calcineurin B homologous protein 1 (195 aa).

Residue G2 is the site of N-myristoyl glycine attachment. The short motif at 2–6 is the Necessary for association with microtubule and interaction with GAPDH element; it reads GSRAS. EF-hand domains lie at 26 to 61, 66 to 101, 110 to 145, and 151 to 186; these read SQIT…AINP, IINA…KSKD, SRSN…MVGV, and QLGS…VDVE. Residues D123, D125, D127, K129, and E134 each contribute to the Ca(2+) site. The short motif at 138-147 is the Nuclear export signal 1 element; the sequence is VLRMMVGVNI. Positions 143-185 are necessary for nuclear export signal; it reads VGVNISDEQLGSIADRTIQEADQDGDSAISFTEFVKVLEKVDV. The Ca(2+) site is built by D164, D166, D168, and E175. Residues 176-185 carry the Nuclear export signal 2 motif; sequence FVKVLEKVDV.

It belongs to the calcineurin regulatory subunit family. CHP subfamily. Monomer. Interacts with STK17B; the interaction occurs in a calcium-independent manner and induces the translocation of CHP1 from the Golgi to the nucleus. Interacts with GAPDH; the interaction is direct, occurs in a N-myristoylation-dependent manner and facilitates the ability of CHP1 to bind microtubules. Interacts with KIF1B (via the C-terminal end of the kinesin-motor domain); the interaction occurs in a calcium-dependent manner. Associates (via C-terminal domain) with microtubules; the association occurs with polymerized microtubules during the cell cycle in a myristoylation- and calcium-independent manner and is enhanced by GAPDH. Interacts with PPP3CA. Interacts with SLC9A1/NHE1 (via the C-terminal domain); the interaction occurs at the plasma membrane in a calcium-dependent manner and at a domain that is critical for growth factor stimulation of the exchanger. Interacts with SLC9A3; increases SLC9A3 trafficking and activity at the plasma membrane. Post-translationally, phosphorylated; decreased phosphorylation is associated with an increase in SLC9A1/NHE1 Na(+)/H(+) exchange activity. Phosphorylation occurs in serum-dependent manner. The phosphorylation state may regulate the binding to SLC9A1/NHE1. Both N-myristoylation and calcium-mediated conformational changes are essential for its function in exocytic traffic. N-myristoylation is required for its association with microtubules and interaction with GAPDH, but not for the constitutive association to membranes. In terms of tissue distribution, ubiquitously expressed. Has been found in fetal eye, lung, liver, muscle, heart, kidney, thymus and spleen.

The protein resides in the nucleus. It localises to the cytoplasm. It is found in the cytoskeleton. Its subcellular location is the endomembrane system. The protein localises to the endoplasmic reticulum-Golgi intermediate compartment. The protein resides in the endoplasmic reticulum. It localises to the cell membrane. It is found in the membrane. In terms of biological role, calcium-binding protein involved in different processes such as regulation of vesicular trafficking, plasma membrane Na(+)/H(+) exchanger and gene transcription. Involved in the constitutive exocytic membrane traffic. Mediates the association between microtubules and membrane-bound organelles of the endoplasmic reticulum and Golgi apparatus and is also required for the targeting and fusion of transcytotic vesicles (TCV) with the plasma membrane. Functions as an integral cofactor in cell pH regulation by controlling plasma membrane-type Na(+)/H(+) exchange activity. Affects the pH sensitivity of SLC9A1/NHE1 by increasing its sensitivity at acidic pH. Required for the stabilization and localization of SLC9A1/NHE1 at the plasma membrane. Inhibits serum- and GTPase-stimulated Na(+)/H(+) exchange. Plays a role as an inhibitor of ribosomal RNA transcription by repressing the nucleolar UBF1 transcriptional activity. May sequester UBF1 in the nucleoplasm and limit its translocation to the nucleolus. Associates to the ribosomal gene promoter. Acts as a negative regulator of the calcineurin/NFAT signaling pathway. Inhibits NFAT nuclear translocation and transcriptional activity by suppressing the calcium-dependent calcineurin phosphatase activity. Also negatively regulates the kinase activity of the apoptosis-induced kinase STK17B. Inhibits both STK17B auto- and substrate-phosphorylations in a calcium-dependent manner. The polypeptide is Calcineurin B homologous protein 1 (CHP1) (Homo sapiens (Human)).